The chain runs to 160 residues: MRCPYCQYEDTQVKDSRPSEEGTVIRRRRICSVCGGRFTTFERVQLRELLVLKKSGRYEPFDRDKLMRSVEIAVRKRGIDPDYIERVISGIVRQLESLGEPEISSEKIGLLVMKALKSIDDIAYIRFASVYRDFRNASDFHDVIEELSKGITDTESCFDE.

The segment at 3 to 34 (CPYCQYEDTQVKDSRPSEEGTVIRRRRICSVC) is a zinc-finger region. An ATP-cone domain is found at 49-139 (LLVLKKSGRY…VYRDFRNASD (91 aa)).

The protein belongs to the NrdR family. Zn(2+) is required as a cofactor.

Negatively regulates transcription of bacterial ribonucleotide reductase nrd genes and operons by binding to NrdR-boxes. This is Transcriptional repressor NrdR from Bartonella henselae (strain ATCC 49882 / DSM 28221 / CCUG 30454 / Houston 1) (Rochalimaea henselae).